A 503-amino-acid chain; its full sequence is Aromatase (503 aa).

Transmembrane regions (helical) follow at residues 19–39 (EVMP…LLVW), 51–71 (GYCM…MGIG), and 303–323 (MLIA…FLIA). Residues Asp-309 and Met-374 each coordinate substrate. A heme-binding site is contributed by Cys-437.

Belongs to the cytochrome P450 family. Requires heme as cofactor.

It is found in the endoplasmic reticulum membrane. Its subcellular location is the microsome membrane. It carries out the reaction testosterone + 3 reduced [NADPH--hemoprotein reductase] + 3 O2 = 17beta-estradiol + formate + 3 oxidized [NADPH--hemoprotein reductase] + 4 H2O + 4 H(+). The catalysed reaction is androst-4-ene-3,17-dione + 3 reduced [NADPH--hemoprotein reductase] + 3 O2 = estrone + formate + 3 oxidized [NADPH--hemoprotein reductase] + 4 H2O + 4 H(+). The enzyme catalyses androst-4-ene-3,17-dione + reduced [NADPH--hemoprotein reductase] + O2 = 19-hydroxyandrost-4-ene-3,17-dione + oxidized [NADPH--hemoprotein reductase] + H2O + H(+). It catalyses the reaction 19-hydroxyandrost-4-ene-3,17-dione + reduced [NADPH--hemoprotein reductase] + O2 = 19-oxo-androst-4-ene-3,17-dione + oxidized [NADPH--hemoprotein reductase] + 2 H2O + H(+). It carries out the reaction 19-oxo-androst-4-ene-3,17-dione + reduced [NADPH--hemoprotein reductase] + O2 = estrone + formate + oxidized [NADPH--hemoprotein reductase] + H2O + 2 H(+). The catalysed reaction is estrone + reduced [NADPH--hemoprotein reductase] + O2 = 2-hydroxyestrone + oxidized [NADPH--hemoprotein reductase] + H2O + H(+). The enzyme catalyses 17beta-hydroxy-5alpha-androstan-3-one + reduced [NADPH--hemoprotein reductase] + O2 = 17beta,19-dihydroxy-3-oxo-5alpha-androstanone + oxidized [NADPH--hemoprotein reductase] + H2O + H(+). It catalyses the reaction 17beta,19-dihydroxy-3-oxo-5alpha-androstanone + reduced [NADPH--hemoprotein reductase] + O2 = 17beta-hydroxy-3,19-dioxo-5alpha-androstanone + oxidized [NADPH--hemoprotein reductase] + 2 H2O + H(+). It carries out the reaction 17beta-hydroxy-3,19-dioxo-5alpha-androstanone + reduced [NADPH--hemoprotein reductase] + O2 = 17beta-hydroxy-3-oxo-19-nor-5alpha-androst-1-ene + formate + oxidized [NADPH--hemoprotein reductase] + H2O + 2 H(+). The protein operates within steroid hormone biosynthesis. In terms of biological role, a cytochrome P450 monooxygenase that catalyzes the conversion of C19 androgens, androst-4-ene-3,17-dione (androstenedione) and testosterone to the C18 estrogens, estrone and estradiol, respectively. Catalyzes three successive oxidations of C19 androgens: two conventional oxidations at C19 yielding 19-hydroxy and 19-oxo/19-aldehyde derivatives, followed by a third oxidative aromatization step that involves C1-beta hydrogen abstraction combined with cleavage of the C10-C19 bond to yield a phenolic A ring and formic acid. Alternatively, the third oxidative reaction yields a 19-norsteroid and formic acid. Converts dihydrotestosterone to delta1,10-dehydro 19-nordihydrotestosterone and may play a role in homeostasis of this potent androgen. Also displays 2-hydroxylase activity toward estrone. Mechanistically, uses molecular oxygen inserting one oxygen atom into a substrate, and reducing the second into a water molecule, with two electrons provided by NADPH via cytochrome P450 reductase (CPR; NADPH-ferrihemoprotein reductase). This chain is Aromatase (CYP19A1), found in Canis lupus familiaris (Dog).